The following is a 545-amino-acid chain: Glucose-6-phosphate isomerase (545 aa).

Glu345 (proton donor) is an active-site residue. Catalysis depends on residues His376 and Lys514.

Belongs to the GPI family.

The protein localises to the cytoplasm. The enzyme catalyses alpha-D-glucose 6-phosphate = beta-D-fructose 6-phosphate. The protein operates within carbohydrate biosynthesis; gluconeogenesis. It functions in the pathway carbohydrate degradation; glycolysis; D-glyceraldehyde 3-phosphate and glycerone phosphate from D-glucose: step 2/4. In terms of biological role, catalyzes the reversible isomerization of glucose-6-phosphate to fructose-6-phosphate. This Leptothrix cholodnii (strain ATCC 51168 / LMG 8142 / SP-6) (Leptothrix discophora (strain SP-6)) protein is Glucose-6-phosphate isomerase.